The chain runs to 315 residues: Three-prime repair exonuclease 1 (315 aa).

Mg(2+)-binding residues include Asp18 and Glu20. 20–21 (EA) is a substrate binding site. Ser78 is subject to Phosphoserine. Tyr129 is a binding site for substrate. The residue at position 167 (Ser167) is a Phosphoserine. His195 acts as the Proton donor/acceptor in catalysis. Asp200 lines the Mg(2+) pocket. Substrate is bound at residue Asp200. The tract at residues 236 to 315 (TTSTGTNPRP…YGLSLAMPGQ (80 aa)) is necessary for endoplasmic reticulum localization. Residues 243 to 315 (PRPSAVTATV…YGLSLAMPGQ (73 aa)) are interaction with UBQLN1. Positions 256–282 (RASDTGPNLRGDRSPKPAPSPKMCPGA) are disordered. A compositionally biased stretch (pro residues) spans 271-282 (KPAPSPKMCPGA). Positions 282–315 (APPGEGLLAPLGLLAFLTLAVAMLYGLSLAMPGQ) are necessary for cytoplasmic retention.

The protein belongs to the exonuclease superfamily. TREX family. As to quaternary structure, homodimer. Interacts (via proline-rich region) with TCERG1/CA150 (via the second WW domain). Component of the SET complex, composed of at least ANP32A, APEX1, HMGB2, NME1, SET and TREX1. Within this complex, directly interacts with SET; this interaction does not result in TREX1 inhibition. Also interacts with NME1, but only following translocation to the nucleus. Directly interacts with UBQLN1 (via ubiquitin-like domain); the interaction may control TREX1 subcellular location. Mg(2+) serves as cofactor. In terms of processing, ubiquitinated, but not targeted to proteasomal degradation. Ubiquitination may be important for interaction with UBQLN1.

The protein resides in the nucleus. Its subcellular location is the cytoplasm. The protein localises to the cytosol. It is found in the endoplasmic reticulum membrane. It catalyses the reaction Exonucleolytic cleavage in the 3'- to 5'-direction to yield nucleoside 5'-phosphates.. Its function is as follows. Major cellular 3'-to-5' DNA exonuclease which digests single-stranded DNA (ssDNA) and double-stranded DNA (dsDNA) with mismatched 3' termini. Prevents cell-intrinsic initiation of autoimmunity. Acts by metabolizing DNA fragments from endogenous retroelements, including L1, LTR and SINE elements. Plays a key role in degradation of DNA fragments at cytosolic micronuclei arising from genome instability: its association with the endoplasmic reticulum membrane directs TREX1 to ruptured micronuclei, leading to micronuclear DNA degradation. Micronuclear DNA degradation is required to limit CGAS activation and subsequent inflammation. Unless degraded, these DNA fragments accumulate in the cytosol and activate the cGAS-STING innate immune signaling, leading to the production of type I interferon. Prevents chronic ATM-dependent checkpoint activation, by processing ssDNA polynucleotide species arising from the processing of aberrant DNA replication intermediates. Inefficiently degrades oxidized DNA, such as that generated upon antimicrobial reactive oxygen production or upon absorption of UV light. During GZMA-mediated cell death, contributes to DNA damage in concert with NME1. NME1 nicks one strand of DNA and TREX1 removes bases from the free 3' end to enhance DNA damage and prevent DNA end reannealing and rapid repair. The protein is Three-prime repair exonuclease 1 of Bos taurus (Bovine).